The sequence spans 317 residues: Transcriptional regulator LsrR (317 aa).

The H-T-H motif DNA-binding region spans glutamine 33 to glutamine 56.

The protein belongs to the SorC transcriptional regulatory family.

It is found in the cytoplasm. With respect to regulation, inactivated by phosphorylated autoinducer-2 (phospho-AI-2). Phospho-AI-2 acts by binding to LsrR, which is then unable to bind to the promoter regions, allowing the transcription of the target genes. Transcriptional regulator that represses the expression of the lsr operon in the absence of the quorum-sensing signaling molecule autoinducer 2 (AI-2). It also represses the expression of the lsrRK operon. Acts by binding directly to the lsrA and lsrR promoter regions. In the presence of phosphorylated autoinducer-2 (phospho-AI-2), LsrR is inactivated, leading to the transcription of the genes. This is Transcriptional regulator LsrR (lsrR) from Escherichia coli O139:H28 (strain E24377A / ETEC).